Reading from the N-terminus, the 146-residue chain is UPF0178 protein R01393 (146 aa).

This sequence belongs to the UPF0178 family.

The sequence is that of UPF0178 protein R01393 from Rhizobium meliloti (strain 1021) (Ensifer meliloti).